Here is a 302-residue protein sequence, read N- to C-terminus: Nucleotide-binding protein SERP0433 (302 aa).

18–25 (GMSGAGKS) is an ATP binding site. 69–72 (DLRG) lines the GTP pocket.

This sequence belongs to the RapZ-like family.

Displays ATPase and GTPase activities. This is Nucleotide-binding protein SERP0433 from Staphylococcus epidermidis (strain ATCC 35984 / DSM 28319 / BCRC 17069 / CCUG 31568 / BM 3577 / RP62A).